The chain runs to 514 residues: ATP synthase subunit alpha (514 aa).

Residue 170–177 coordinates ATP; sequence GDRQIGKT.

It belongs to the ATPase alpha/beta chains family. F-type ATPases have 2 components, CF(1) - the catalytic core - and CF(0) - the membrane proton channel. CF(1) has five subunits: alpha(3), beta(3), gamma(1), delta(1), epsilon(1). CF(0) has three main subunits: a(1), b(2) and c(9-12). The alpha and beta chains form an alternating ring which encloses part of the gamma chain. CF(1) is attached to CF(0) by a central stalk formed by the gamma and epsilon chains, while a peripheral stalk is formed by the delta and b chains.

The protein localises to the cell inner membrane. It carries out the reaction ATP + H2O + 4 H(+)(in) = ADP + phosphate + 5 H(+)(out). Functionally, produces ATP from ADP in the presence of a proton gradient across the membrane. The alpha chain is a regulatory subunit. The protein is ATP synthase subunit alpha of Pseudomonas entomophila (strain L48).